We begin with the raw amino-acid sequence, 192 residues long: UPF0149 protein YgfB (192 aa).

It belongs to the UPF0149 family.

In Escherichia coli O127:H6 (strain E2348/69 / EPEC), this protein is UPF0149 protein YgfB.